Here is a 350-residue protein sequence, read N- to C-terminus: DNA primase small subunit PriS (350 aa).

Residues Asp-97, Asp-99, and Asp-251 contribute to the active site.

The protein belongs to the eukaryotic-type primase small subunit family. Heterodimer of a small subunit (PriS) and a large subunit (PriL). Mg(2+) serves as cofactor. The cofactor is Mn(2+). Requires Zn(2+) as cofactor.

Its function is as follows. Catalytic subunit of DNA primase, an RNA polymerase that catalyzes the synthesis of short RNA molecules used as primers for DNA polymerase during DNA replication. The small subunit contains the primase catalytic core and has DNA synthesis activity on its own. Binding to the large subunit stabilizes and modulates the activity, increasing the rate of DNA synthesis while decreasing the length of the DNA fragments, and conferring RNA synthesis capability. The DNA polymerase activity may enable DNA primase to also catalyze primer extension after primer synthesis. May also play a role in DNA repair. The polypeptide is DNA primase small subunit PriS (Methanocaldococcus jannaschii (strain ATCC 43067 / DSM 2661 / JAL-1 / JCM 10045 / NBRC 100440) (Methanococcus jannaschii)).